The chain runs to 629 residues: Putrebactin synthase (629 aa).

This sequence belongs to the IucA/IucC family. In terms of assembly, homodimer.

The enzyme catalyses 2 N-(3-carboxypropanoyl)-N-hydroxyputrescine + 2 ATP = putrebactin + 2 AMP + 2 diphosphate + 2 H(+). It catalyses the reaction 2 N-(3-carboxypropanoyl)-N-hydroxyputrescine + ATP = pre-putrebactin + AMP + diphosphate + H(+). It carries out the reaction pre-putrebactin + ATP = putrebactin + AMP + diphosphate + H(+). Its pathway is siderophore biosynthesis. With respect to regulation, requires Mg(2+) for activity. Its function is as follows. Ligase involved in the biosynthesis of the siderophore putrebactin. Catalyzes the ATP-dependent head-to-tail dimerization of N-hydroxy-N-succinyl-putrescine (HSP) to give pre-putrebactin and subsequent macrocyclization of pre-putrebactin to give putrebactin. The protein is Putrebactin synthase of Shewanella sp. (strain MR-4).